Reading from the N-terminus, the 160-residue chain is Endoribonuclease YbeY (160 aa).

Residues His-123, His-127, and His-133 each coordinate Zn(2+).

The protein belongs to the endoribonuclease YbeY family. Zn(2+) serves as cofactor.

It is found in the cytoplasm. In terms of biological role, single strand-specific metallo-endoribonuclease involved in late-stage 70S ribosome quality control and in maturation of the 3' terminus of the 16S rRNA. This is Endoribonuclease YbeY from Shouchella clausii (strain KSM-K16) (Alkalihalobacillus clausii).